The chain runs to 1054 residues: Calcium-transporting ATPase 2, endoplasmic reticulum-type (1054 aa).

The Cytoplasmic portion of the chain corresponds to 1 to 53 (MEEEKSFSAWSWSVEQCLKEYKTRLDKGLTSEDVQIRRQKYGFNELAKEKGKP). A helical transmembrane segment spans residues 54-74 (LWHLVLEQFDDTLVKILLGAA). The Lumenal segment spans residues 75–98 (FISFVLAFLGEEHGSGSGFEAFVE). Residues 99-118 (PFVIVLILILNAVVGVWQES) traverse the membrane as a helical segment. At 119–262 (NAEKALEALK…ESETPLKKKL (144 aa)) the chain is on the cytoplasmic side. A helical transmembrane segment spans residues 263 to 282 (DEFGSRLTTAICIVCVLVWM). Topologically, residues 283–312 (INYKNFVSWDVVDGYKPVNIKFSFEKCTYY) are lumenal. The chain crosses the membrane as a helical span at residues 313–330 (FKIAVALAVAAIPEGLPA). Residues V321, A322, I324, and E326 each contribute to the Ca(2+) site. Over 331–782 (VITTCLALGT…AEGRSIYNNM (452 aa)) the chain is Cytoplasmic. The active-site 4-aspartylphosphate intermediate is the D368. Mg(2+) contacts are provided by D727 and D731. Residues 783 to 802 (KAFIRYMISSNVGEVISIFL) form a helical membrane-spanning segment. Residues N793 and E796 each contribute to the Ca(2+) site. Over 803 to 812 (TAALGIPECM) the chain is Lumenal. A helical transmembrane segment spans residues 813–833 (IPVQLLWVNLVTDGPPATALG). Positions 821, 824, and 825 each coordinate Ca(2+). Topologically, residues 834–853 (FNPADIDIMKKPPRKSDDCL) are cytoplasmic. Residues 854-876 (IDSWVLIRYLVIGSYVGVATVGI) traverse the membrane as a helical segment. Over 877–949 (FVLWYTQASF…YFTLGKVKPM (73 aa)) the chain is Lumenal. Residues 950–969 (TLSLTVLVAIEMFNSLNALS) form a helical membrane-spanning segment. Residue E960 coordinates Ca(2+). Over 970-982 (EDNSLLTMPPWRN) the chain is Cytoplasmic. A helical transmembrane segment spans residues 983–1001 (PWLLVAMTVSFALHCVILY). At 1002 to 1016 (VPFLANVFGIVPLSF) the chain is on the lumenal side. A helical membrane pass occupies residues 1017–1037 (REWFVVILVSFPVILIDEALK). The Cytoplasmic portion of the chain corresponds to 1038–1054 (FIGRCRRTRIKKKIKTM).

This sequence belongs to the cation transport ATPase (P-type) (TC 3.A.3) family. Type IIA subfamily.

Its subcellular location is the membrane. It carries out the reaction Ca(2+)(in) + ATP + H2O = Ca(2+)(out) + ADP + phosphate + H(+). In terms of biological role, this magnesium-dependent enzyme catalyzes the hydrolysis of ATP coupled with the translocation of calcium from the cytosol to an endomembrane compartment. This is Calcium-transporting ATPase 2, endoplasmic reticulum-type (ECA2) from Arabidopsis thaliana (Mouse-ear cress).